The sequence spans 289 residues: Rhomboid-type serine protease 2 (289 aa).

6 helical membrane-spanning segments follow: residues 26–46 (VVII…VDIQ), 67–87 (FPFI…LTPL), 100–120 (CLAL…IGLE), 122–142 (FVFG…LLLG), 157–179 (IGTY…AVLV), and 184–203 (FWGH…SSTL). Residue Ser-134 is the Nucleophile of the active site. Residue His-187 is part of the active site.

Belongs to the peptidase S54 family.

It is found in the golgi apparatus membrane. Its subcellular location is the golgi apparatus. It localises to the cis-Golgi network membrane. The catalysed reaction is Cleaves type-1 transmembrane domains using a catalytic dyad composed of serine and histidine that are contributed by different transmembrane domains.. Probable rhomboid-type serine protease that catalyzes intramembrane proteolysis. The chain is Rhomboid-type serine protease 2 (RBD2) from Podospora anserina (Pleurage anserina).